A 201-amino-acid chain; its full sequence is Small ribosomal subunit protein uS4c (201 aa).

In terms of domain architecture, S4 RNA-binding spans 89 to 152; the sequence is MRLDNILFRL…NSRTLVQNLL (64 aa).

Belongs to the universal ribosomal protein uS4 family. As to quaternary structure, part of the 30S ribosomal subunit. Contacts protein S5. The interaction surface between S4 and S5 is involved in control of translational fidelity.

Its subcellular location is the plastid. The protein localises to the chloroplast. In terms of biological role, one of the primary rRNA binding proteins, it binds directly to 16S rRNA where it nucleates assembly of the body of the 30S subunit. Its function is as follows. With S5 and S12 plays an important role in translational accuracy. The protein is Small ribosomal subunit protein uS4c (rps4) of Olimarabidopsis pumila (Dwarf rocket).